Consider the following 288-residue polypeptide: 33 kDa chaperonin (288 aa).

2 cysteine pairs are disulfide-bonded: C233–C235 and C267–C270.

This sequence belongs to the HSP33 family. Post-translationally, under oxidizing conditions two disulfide bonds are formed involving the reactive cysteines. Under reducing conditions zinc is bound to the reactive cysteines and the protein is inactive.

The protein resides in the cytoplasm. Functionally, redox regulated molecular chaperone. Protects both thermally unfolding and oxidatively damaged proteins from irreversible aggregation. Plays an important role in the bacterial defense system toward oxidative stress. In Actinobacillus succinogenes (strain ATCC 55618 / DSM 22257 / CCUG 43843 / 130Z), this protein is 33 kDa chaperonin.